The primary structure comprises 520 residues: GMP synthase [glutamine-hydrolyzing] (520 aa).

One can recognise a Glutamine amidotransferase type-1 domain in the interval 13–205 (KIIVLDYGSQ…ALNICKAKGD (193 aa)). Cys-90 (nucleophile) is an active-site residue. Active-site residues include His-179 and Glu-181. The GMPS ATP-PPase domain maps to 206-395 (WSMDNFIDMQ…LGMPDHIVWR (190 aa)). 233 to 239 (SGGVDSS) contacts ATP.

In terms of assembly, homodimer.

The catalysed reaction is XMP + L-glutamine + ATP + H2O = GMP + L-glutamate + AMP + diphosphate + 2 H(+). It functions in the pathway purine metabolism; GMP biosynthesis; GMP from XMP (L-Gln route): step 1/1. In terms of biological role, catalyzes the synthesis of GMP from XMP. The chain is GMP synthase [glutamine-hydrolyzing] from Streptococcus pneumoniae (strain CGSP14).